We begin with the raw amino-acid sequence, 203 residues long: A-type ATP synthase subunit E (203 aa).

Belongs to the V-ATPase E subunit family. Has multiple subunits with at least A(3), B(3), C, D, E, F, H, I and proteolipid K(x).

It localises to the cell membrane. In terms of biological role, component of the A-type ATP synthase that produces ATP from ADP in the presence of a proton gradient across the membrane. The polypeptide is A-type ATP synthase subunit E (Methanococcus maripaludis (strain C6 / ATCC BAA-1332)).